The primary structure comprises 1188 residues: DNA-directed RNA polymerase subunit beta (1188 aa).

This sequence belongs to the RNA polymerase beta chain family. In terms of assembly, the RNAP catalytic core consists of 2 alpha, 1 beta, 1 beta' and 1 omega subunit. When a sigma factor is associated with the core the holoenzyme is formed, which can initiate transcription.

It catalyses the reaction RNA(n) + a ribonucleoside 5'-triphosphate = RNA(n+1) + diphosphate. Its function is as follows. DNA-dependent RNA polymerase catalyzes the transcription of DNA into RNA using the four ribonucleoside triphosphates as substrates. The polypeptide is DNA-directed RNA polymerase subunit beta (Streptococcus equi subsp. zooepidemicus (strain H70)).